The sequence spans 631 residues: uncharacterized protein (631 aa).

This is an uncharacterized protein from Escherichia coli (strain K12).